The sequence spans 265 residues: 4-hydroxy-tetrahydrodipicolinate reductase (265 aa).

Residues 7–12 (GASGRM) and Asp-33 each bind NAD(+). Arg-34 is an NADP(+) binding site. Residues 96-98 (GTT) and 120-123 (AANM) contribute to the NAD(+) site. His-153 serves as the catalytic Proton donor/acceptor. His-154 serves as a coordination point for (S)-2,3,4,5-tetrahydrodipicolinate. The Proton donor role is filled by Lys-157. 163–164 (GT) is a (S)-2,3,4,5-tetrahydrodipicolinate binding site.

This sequence belongs to the DapB family.

Its subcellular location is the cytoplasm. It carries out the reaction (S)-2,3,4,5-tetrahydrodipicolinate + NAD(+) + H2O = (2S,4S)-4-hydroxy-2,3,4,5-tetrahydrodipicolinate + NADH + H(+). The catalysed reaction is (S)-2,3,4,5-tetrahydrodipicolinate + NADP(+) + H2O = (2S,4S)-4-hydroxy-2,3,4,5-tetrahydrodipicolinate + NADPH + H(+). The protein operates within amino-acid biosynthesis; L-lysine biosynthesis via DAP pathway; (S)-tetrahydrodipicolinate from L-aspartate: step 4/4. In terms of biological role, catalyzes the conversion of 4-hydroxy-tetrahydrodipicolinate (HTPA) to tetrahydrodipicolinate. This is 4-hydroxy-tetrahydrodipicolinate reductase from Burkholderia orbicola (strain MC0-3).